The chain runs to 782 residues: Coiled-coil alpha-helical rod protein 1 (782 aa).

2 stretches are compositionally biased toward basic and acidic residues: residues 62 to 74 and 208 to 218; these read ERDVSSDRQEPGR and ETRRAGEAKEL. Disordered stretches follow at residues 62–82 and 191–218; these read ERDVSSDRQEPGRRGRSWGLE and SSLTSKAEGLEKSLSSLETRRAGEAKEL. Coiled coils occupy residues 82–314, 344–435, and 498–691; these read EGSQ…ELTR, LMVQ…VVNA, and VADV…QQEG.

Its subcellular location is the cytoplasm. The protein resides in the nucleus. In terms of biological role, may be a regulator of keratinocyte proliferation or differentiation. The sequence is that of Coiled-coil alpha-helical rod protein 1 (CCHCR1) from Pongo pygmaeus (Bornean orangutan).